Reading from the N-terminus, the 201-residue chain is MRLRNIPDALERIQNQNLLVKTPWNIDDSWIIEIGMGKGKMISQLAFDNPNKNFLGVEKYPSAAVKSIKYVKKYNLSNFFILISDAKDLLDQIKGKANTIWLTFPDPWPKNRHYKRRLTYKDFLKIYANLLVKDGILKLKTDNLKFFEFSIESLKENGWKITYQTNDLHNSLVNSSNIKTTYEEKWVNLNYKIHYLEAIFI.

Residues Glu33, Glu58, Asp85, and Asp106 each contribute to the S-adenosyl-L-methionine site. Residue Asp106 is part of the active site. Substrate-binding positions include Lys110, Asp142, and 180 to 183 (TTYE).

This sequence belongs to the class I-like SAM-binding methyltransferase superfamily. TrmB family.

It catalyses the reaction guanosine(46) in tRNA + S-adenosyl-L-methionine = N(7)-methylguanosine(46) in tRNA + S-adenosyl-L-homocysteine. It participates in tRNA modification; N(7)-methylguanine-tRNA biosynthesis. Catalyzes the formation of N(7)-methylguanine at position 46 (m7G46) in tRNA. The polypeptide is tRNA (guanine-N(7)-)-methyltransferase (Mesomycoplasma hyopneumoniae (strain 7448) (Mycoplasma hyopneumoniae)).